We begin with the raw amino-acid sequence, 501 residues long: Sodium-coupled neutral amino acid symporter 2 (501 aa).

The disordered stretch occupies residues 1–26; the sequence is MSSAEMGKFDISPDEDSSSYSSNSND. Residues 1–77 lie on the Cytoplasmic side of the membrane; it reads MSSAEMGKFD…HPGTTSFGMS (77 aa). Residues 1 to 97 form a regulates protein turnover upon amino acid deprivation region; it reads MSSAEMGKFD…SGILGLSYAM (97 aa). The helical transmembrane segment at 78–97 threads the bilayer; the sequence is VFNLSNAIVGSGILGLSYAM. Asparagine 83 provides a ligand contact to Na(+). Residues 98-103 lie on the Extracellular side of the membrane; it reads ANTGIA. A helical membrane pass occupies residues 104–124; the sequence is LFVILLLVVSILSLYSVHLLL. Over 125–159 the chain is Cytoplasmic; the sequence is KTANEGGSLLYEQLGMKAFGMPGKLAASGSITMQN. Residues 160–178 traverse the membrane as a helical segment; it reads IGAMSSYLFIVKYELPLVI. The Extracellular segment spans residues 179–189; that stretch reads KTFMNIEENAG. A helical transmembrane segment spans residues 190–210; that stretch reads HWYLNGDYLVLLVSVILILPL. The Cytoplasmic segment spans residues 211–218; it reads SLLKNLGY. Residues 219–239 form a helical membrane-spanning segment; the sequence is LGYTSGFSLLCMVFFLIVVIW. Residues 240-287 lie on the Extracellular side of the membrane; that stretch reads KMFQIPCPMESDIINATLINATLAPFADENITISDACKPEYFIFNSQT. A disulfide bridge links cysteine 246 with cysteine 276. N-linked (GlcNAc...) asparagine glycosylation is found at asparagine 254 and asparagine 259. The helical transmembrane segment at 288 to 308 threads the bilayer; the sequence is VYAVPILTFSFVCHPAILPIY. At 309–324 the chain is on the cytoplasmic side; it reads EELKSRSRKRMMNVSY. The helical transmembrane segment at 325–345 threads the bilayer; sequence VSFFAMFLMYLLAALFGYLTF. Topologically, residues 346–366 are extracellular; that stretch reads YGRVESELLHTYSAFLGADIL. A helical membrane pass occupies residues 367 to 387; that stretch reads LLIVRLAVLMAVTLTVPVVIF. Na(+) is bound at residue threonine 381. Residues 388–408 are Cytoplasmic-facing; it reads PIRSSVTQLLWAGKEFSWWRH. A helical transmembrane segment spans residues 409–429; that stretch reads CSITVVLLAFTNVLVIFVPTI. Residues 430-431 lie on the Extracellular side of the membrane; it reads RD. The chain crosses the membrane as a helical span at residues 432–452; sequence IFGFIGASAAAMLIFILPSAF. Residues 453-467 lie on the Cytoplasmic side of the membrane; the sequence is YIKLVKKEPMKSVQK. Residues 468-490 traverse the membrane as a helical segment; the sequence is IGAALFFLSGILVMTGCMTLIIL. Residues 491–501 lie on the Extracellular side of the membrane; the sequence is DWIHTDASDGH.

Belongs to the amino acid/polyamine transporter 2 family.

It localises to the cell membrane. It carries out the reaction L-alanine(in) + Na(+)(in) = L-alanine(out) + Na(+)(out). The catalysed reaction is glycine(in) + Na(+)(in) = glycine(out) + Na(+)(out). It catalyses the reaction L-serine(in) + Na(+)(in) = L-serine(out) + Na(+)(out). The enzyme catalyses L-proline(in) + Na(+)(in) = L-proline(out) + Na(+)(out). It carries out the reaction L-methionine(in) + Na(+)(in) = L-methionine(out) + Na(+)(out). The catalysed reaction is L-histidine(in) + Na(+)(in) = L-histidine(out) + Na(+)(out). It catalyses the reaction L-asparagine(in) + Na(+)(in) = L-asparagine(out) + Na(+)(out). The enzyme catalyses L-glutamine(in) + Na(+)(in) = L-glutamine(out) + Na(+)(out). It carries out the reaction L-threonine(in) + Na(+)(in) = L-threonine(out) + Na(+)(out). The catalysed reaction is L-leucine(in) + Na(+)(in) = L-leucine(out) + Na(+)(out). It catalyses the reaction L-phenylalanine(in) + Na(+)(in) = L-phenylalanine(out) + Na(+)(out). With respect to regulation, inhibited by N-methyl-D-glucamine. Inhibited by choline. Allosteric regulation of sodium ions binding by pH. Its function is as follows. Symporter that cotransports neutral amino acids and sodium ions from the extracellular to the intracellular side of the cell membrane. The transport is pH-sensitive, Li(+)-intolerant, electrogenic, driven by the Na(+) electrochemical gradient and cotransports of neutral amino acids and sodium ions with a stoichiometry of 1:1. The polypeptide is Sodium-coupled neutral amino acid symporter 2 (Gallus gallus (Chicken)).